The primary structure comprises 201 residues: Desiccation-related protein PCC3-06 (201 aa).

The span at 41–54 (TVASQSQGRQQVSE) shows a compositional bias: polar residues. Disordered stretches follow at residues 41–155 (TVAS…QNVK) and 177–201 (MGKS…TNYF). Composition is skewed to basic and acidic residues over residues 57–76 (EDAK…KTSE), 108–144 (GELK…ERVA), and 177–193 (MGKS…ETKK).

Belongs to the LEA type 1 family.

In Craterostigma plantagineum (Blue gem), this protein is Desiccation-related protein PCC3-06.